The sequence spans 536 residues: Transcription factor cheR (536 aa).

The zn(2)-C6 fungal-type DNA-binding region spans 19–57 (CDRCHRHKLRCERSSVIVNGGVAVPLGPCKRCLKACIPC). Disordered stretches follow at residues 70 to 122 (AKTG…LSGT) and 220 to 243 (ALTD…PREE). Positions 88–108 (AASPAKRAPSPARRPTASTPR) are enriched in low complexity.

Its subcellular location is the nucleus. Its function is as follows. Transcription factor; part of the gene cluster that mediates the biosynthesis of chaetoglobosin A which has a unique inhibitory activity against actin polymerization in mammalian cells. Chaetoglobosin A and its intermediates are involved in the morphological differentiation of C.globosum. Binds directly to asymmetric direct repeats present in the promoters of the chaetoglobosin A cluster genes. The protein is Transcription factor cheR of Chaetomium globosum (strain ATCC 6205 / CBS 148.51 / DSM 1962 / NBRC 6347 / NRRL 1970) (Soil fungus).